We begin with the raw amino-acid sequence, 613 residues long: Leucine-rich repeat receptor-like protein FASCIATED EAR2 (613 aa).

The N-terminal stretch at 1–28 (MLTATPLPHQLLATFLLVLASATQPAVP) is a signal peptide. The Extracellular segment spans residues 29–573 (ASTDRAALLA…WLGGWHGENG (545 aa)). LRR repeat units lie at residues 79 to 103 (TPSV…PLAL), 104 to 128 (LRRL…LPRS), 130 to 150 (LALD…LPSS), 151 to 176 (LPAL…SFPA), 178 to 199 (LAAL…IVAD), 202 to 226 (NSAL…IAAV), 227 to 250 (RSLQ…IGNL), 251 to 274 (TYLQ…LAGC), 276 to 297 (QLLY…ELDA), 298 to 322 (LASL…LAGC), 324 to 346 (SLEV…VAKW), 347 to 370 (LSLK…MFSF), 372 to 394 (LLQW…GFNV), 435 to 459 (VQAT…LVDM), 460 to 483 (KGLE…LGGM), 484 to 507 (GRLH…IAAM), and 508 to 531 (TVLE…KFPG). Asparagine 91 carries N-linked (GlcNAc...) asparagine glycosylation. A glycan (N-linked (GlcNAc...) asparagine) is linked at asparagine 158. Asparagine 249 carries N-linked (GlcNAc...) asparagine glycosylation. An N-linked (GlcNAc...) asparagine glycan is attached at asparagine 393. The N-linked (GlcNAc...) asparagine glycan is linked to asparagine 466. An N-linked (GlcNAc...) asparagine glycan is attached at asparagine 514. A helical transmembrane segment spans residues 574–597 (WVSLGAFCISTMTSFYVSLATLLC). Residues 598–613 (SSNARNFVFRPVRVEY) are Cytoplasmic-facing.

As to expression, expressed in ear primordia, vegetative apex and young leaf tissues. Barely detected in expanded leaf tissues and not expressed in roots.

The protein resides in the cell membrane. Functionally, receptor-like protein that regulates shoot meristem proliferation. Based on additive and synergistic phenotypes of double mutants, it is probable that unlike CLV1 and CLV2 in A.thaliana, FAE2 and TD1 do not function exclusively in a single pathway. In Zea mays (Maize), this protein is Leucine-rich repeat receptor-like protein FASCIATED EAR2 (FEA2).